The sequence spans 370 residues: tRNA-specific 2-thiouridylase MnmA (370 aa).

ATP is bound by residues 9 to 16 (GMSGGVDS) and Met-35. The interaction with target base in tRNA stretch occupies residues 95-97 (NPD). The Nucleophile role is filled by Cys-100. The cysteines at positions 100 and 196 are disulfide-linked. Gly-124 provides a ligand contact to ATP. The segment at 146 to 148 (KDQ) is interaction with tRNA. Cys-196 serves as the catalytic Cysteine persulfide intermediate. The segment at 308-309 (RY) is interaction with tRNA.

Belongs to the MnmA/TRMU family.

The protein localises to the cytoplasm. It catalyses the reaction S-sulfanyl-L-cysteinyl-[protein] + uridine(34) in tRNA + AH2 + ATP = 2-thiouridine(34) in tRNA + L-cysteinyl-[protein] + A + AMP + diphosphate + H(+). Functionally, catalyzes the 2-thiolation of uridine at the wobble position (U34) of tRNA, leading to the formation of s(2)U34. This is tRNA-specific 2-thiouridylase MnmA from Ralstonia nicotianae (strain ATCC BAA-1114 / GMI1000) (Ralstonia solanacearum).